The following is a 488-amino-acid chain: 3-octaprenyl-4-hydroxybenzoate carboxy-lyase (488 aa).

Mn(2+) is bound at residue Asn-172. Residues 175–177 (IYR), 189–191 (RWL), and 194–195 (RG) contribute to the prenylated FMN site. Glu-238 contacts Mn(2+). The active-site Proton donor is the Asp-287.

Belongs to the UbiD family. Homohexamer. It depends on prenylated FMN as a cofactor. The cofactor is Mn(2+).

The protein resides in the cell membrane. It carries out the reaction a 4-hydroxy-3-(all-trans-polyprenyl)benzoate + H(+) = a 2-(all-trans-polyprenyl)phenol + CO2. The protein operates within cofactor biosynthesis; ubiquinone biosynthesis. Its function is as follows. Catalyzes the decarboxylation of 3-octaprenyl-4-hydroxy benzoate to 2-octaprenylphenol, an intermediate step in ubiquinone biosynthesis. This chain is 3-octaprenyl-4-hydroxybenzoate carboxy-lyase, found in Pseudomonas putida (strain GB-1).